A 271-amino-acid polypeptide reads, in one-letter code: Putative phosphoenolpyruvate synthase regulatory protein (271 aa).

151–158 (GVSRSGKT) contacts ADP.

The protein belongs to the pyruvate, phosphate/water dikinase regulatory protein family. PSRP subfamily.

The enzyme catalyses [pyruvate, water dikinase] + ADP = [pyruvate, water dikinase]-phosphate + AMP + H(+). The catalysed reaction is [pyruvate, water dikinase]-phosphate + phosphate + H(+) = [pyruvate, water dikinase] + diphosphate. Bifunctional serine/threonine kinase and phosphorylase involved in the regulation of the phosphoenolpyruvate synthase (PEPS) by catalyzing its phosphorylation/dephosphorylation. This is Putative phosphoenolpyruvate synthase regulatory protein from Burkholderia mallei (strain NCTC 10247).